Here is a 431-residue protein sequence, read N- to C-terminus: Chaperone SurA (431 aa).

An N-terminal signal peptide occupies residues 1-20 (MKNWRTLILGLALSASTAFA). PpiC domains are found at residues 171-272 (NDEL…KVND) and 282-382 (VTET…QLLD).

Its subcellular location is the periplasm. It catalyses the reaction [protein]-peptidylproline (omega=180) = [protein]-peptidylproline (omega=0). Chaperone involved in the correct folding and assembly of outer membrane proteins. Recognizes specific patterns of aromatic residues and the orientation of their side chains, which are found more frequently in integral outer membrane proteins. May act in both early periplasmic and late outer membrane-associated steps of protein maturation. The sequence is that of Chaperone SurA from Pectobacterium atrosepticum (strain SCRI 1043 / ATCC BAA-672) (Erwinia carotovora subsp. atroseptica).